Consider the following 188-residue polypeptide: Large ribosomal subunit protein uL6 (188 aa).

Belongs to the universal ribosomal protein uL6 family.

The polypeptide is Large ribosomal subunit protein uL6 (RPL9) (Tetrahymena thermophila (strain SB210)).